We begin with the raw amino-acid sequence, 118 residues long: MTRVKRGYVARRRRKNLFTLTSGFRGTHSKLFRTANQQGMRALVASYRGRVGRKKTLRRLWIVRINAAVRSDGISYNKLIQYLYKNQILLNRKILAQIAILDRFAFFLIIRSIQREEG.

Belongs to the bacterial ribosomal protein bL20 family.

Its subcellular location is the plastid. Its function is as follows. Binds directly to 23S ribosomal RNA and is necessary for the in vitro assembly process of the 50S ribosomal subunit. It is not involved in the protein synthesizing functions of that subunit. The protein is Large ribosomal subunit protein bL20c of Aneura mirabilis (Parasitic liverwort).